We begin with the raw amino-acid sequence, 349 residues long: Thiamine-phosphate synthase (349 aa).

The segment at 1 to 125 (MGCESSLDPR…SAEAAAIRYG (125 aa)) is unknown. The disordered stretch occupies residues 63–85 (RARSTVTDPGAGMEHPAQLDRHS). The tract at residues 126-349 (LYDLEVTCLT…LLSSLSRPTL (224 aa)) is thiamine-phosphate synthase. 4-amino-2-methyl-5-(diphosphooxymethyl)pyrimidine-binding positions include 177–181 (QHRCK) and Asn209. Asp210 and Asp229 together coordinate Mg(2+). Ser248 and Lys277 together coordinate 4-amino-2-methyl-5-(diphosphooxymethyl)pyrimidine. Gly304 is a binding site for 2-[(2R,5Z)-2-carboxy-4-methylthiazol-5(2H)-ylidene]ethyl phosphate.

It belongs to the thiamine-phosphate synthase family. The cofactor is Mg(2+).

The enzyme catalyses 2-[(2R,5Z)-2-carboxy-4-methylthiazol-5(2H)-ylidene]ethyl phosphate + 4-amino-2-methyl-5-(diphosphooxymethyl)pyrimidine + 2 H(+) = thiamine phosphate + CO2 + diphosphate. The catalysed reaction is 2-(2-carboxy-4-methylthiazol-5-yl)ethyl phosphate + 4-amino-2-methyl-5-(diphosphooxymethyl)pyrimidine + 2 H(+) = thiamine phosphate + CO2 + diphosphate. It catalyses the reaction 4-methyl-5-(2-phosphooxyethyl)-thiazole + 4-amino-2-methyl-5-(diphosphooxymethyl)pyrimidine + H(+) = thiamine phosphate + diphosphate. It participates in cofactor biosynthesis; thiamine diphosphate biosynthesis; thiamine phosphate from 4-amino-2-methyl-5-diphosphomethylpyrimidine and 4-methyl-5-(2-phosphoethyl)-thiazole: step 1/1. Condenses 4-methyl-5-(beta-hydroxyethyl)thiazole monophosphate (THZ-P) and 2-methyl-4-amino-5-hydroxymethyl pyrimidine pyrophosphate (HMP-PP) to form thiamine monophosphate (TMP). The protein is Thiamine-phosphate synthase of Parasynechococcus marenigrum (strain WH8102).